The primary structure comprises 562 residues: Nucleoprotein (562 aa).

The tract at residues 53–238 is binding site for the cap structure m7GTP; it reads MRRERRDDND…ITQEESQINI (186 aa). Residues Asp381 and Glu383 each contribute to the Mn(2+) site. Zn(2+) contacts are provided by Glu391, Cys498, His501, and Cys522. A Mn(2+)-binding site is contributed by Asp526.

It belongs to the arenaviridae nucleocapsid protein family. As to quaternary structure, homomultimerizes to form the nucleocapsid. Binds to viral genomic RNA. Interacts with glycoprotein G2. Interacts with protein Z; this interaction probably directs the encapsidated genome to budding sites. Interacts with protein L; this interaction does not interfere with Z-L interaction. Interacts with host IKBKE (via Protein kinase domain); the interaction inhibits IKBKE kinase activity.

It localises to the virion. The protein localises to the host cytoplasm. Its function is as follows. Encapsidates the genome, protecting it from nucleases. The encapsidated genomic RNA is termed the nucleocapsid (NC). Serves as template for viral transcription and replication. The increased presence of protein N in host cell does not seem to trigger the switch from transcription to replication as observed in other negative strain RNA viruses. Through the interaction with host IKBKE, strongly inhibits the phosphorylation and nuclear translocation of host IRF3, a protein involved in interferon activation pathway, leading to the inhibition of interferon-beta and IRF3-dependent promoters activation. Also encodes a functional 3'-5' exoribonuclease that degrades preferentially dsRNA substrates and thereby participates in the suppression of interferon induction. The chain is Nucleoprotein from Tamiami mammarenavirus (isolate Rat/United States/W 10777/1964) (TAMV).